The chain runs to 345 residues: Protein arginine N-methyltransferase 1 (345 aa).

Residues 24–345 enclose the SAM-dependent MTase PRMT-type domain; it reads ADYYFDSYSH…VKNTQQYRMR (322 aa). The S-adenosyl-L-methionine site is built by His37, Arg46, Gly70, Glu92, and Glu121. Catalysis depends on residues Glu136 and Glu145.

It belongs to the class I-like SAM-binding methyltransferase superfamily. Protein arginine N-methyltransferase family. Post-translationally, phosphorylated during flagellum resorption.

It localises to the nucleus. The protein resides in the cell projection. It is found in the cilium. The protein localises to the flagellum. The enzyme catalyses L-arginyl-[protein] + S-adenosyl-L-methionine = N(omega)-methyl-L-arginyl-[protein] + S-adenosyl-L-homocysteine + H(+). It carries out the reaction L-arginyl-[protein] + 2 S-adenosyl-L-methionine = N(omega),N(omega)-dimethyl-L-arginyl-[protein] + 2 S-adenosyl-L-homocysteine + 2 H(+). Functionally, arginine methyltransferase that methylates (mono and asymmetric dimethylation) the guanidino nitrogens of arginyl residues present in target proteins. Mediates asymmetric dimethylation of components of the axoneme during flagellum resorption, such as CCDC40/FAP172, CCDC65/FAP250, RSP1, RSP2, RPS5, RSP6, and tektin. This chain is Protein arginine N-methyltransferase 1 (PRMT1), found in Chlamydomonas reinhardtii (Chlamydomonas smithii).